We begin with the raw amino-acid sequence, 419 residues long: DNA ligase (419 aa).

Residues 1–120 (MLNHFPGHCS…ARQKRGAHTN (120 aa)) form an NTD region. The tract at residues 121 to 317 (RGMIPPMLVK…NYHSAHLAKL (197 aa)) is AD domain. Lys151 (N6-AMP-lysine intermediate) is an active-site residue. Positions 151, 203, and 232 each coordinate ATP. Glu203 contributes to the a divalent metal cation binding site. An a divalent metal cation-binding site is contributed by Glu291. The ATP site is built by Ile294 and Lys316. The segment at 318 to 419 (KPLLDAEFIL…REPINVLEII (102 aa)) is OB domain.

It belongs to the ATP-dependent DNA ligase family.

Its subcellular location is the virion. It catalyses the reaction ATP + (deoxyribonucleotide)n-3'-hydroxyl + 5'-phospho-(deoxyribonucleotide)m = (deoxyribonucleotide)n+m + AMP + diphosphate.. In terms of biological role, very low-fidelity DNA ligase that seals nicks in double-stranded DNA during DNA repair. Together with the viral repair DNA polymerase X, fills the single nucleotide gaps generated by the AP endonuclease. It is not essential for viral replication and recombination. Displays a very low adenylation activity towards DNA with 3'-dideoxy- or 3'-amino-terminated nicks compared to regular nick DNA. The polypeptide is DNA ligase (African swine fever virus (isolate Tick/South Africa/Pretoriuskop Pr4/1996) (ASFV)).